The primary structure comprises 84 residues: Small ribosomal subunit protein uS17 (84 aa).

This sequence belongs to the universal ribosomal protein uS17 family. In terms of assembly, part of the 30S ribosomal subunit.

In terms of biological role, one of the primary rRNA binding proteins, it binds specifically to the 5'-end of 16S ribosomal RNA. The chain is Small ribosomal subunit protein uS17 from Clostridium acetobutylicum (strain ATCC 824 / DSM 792 / JCM 1419 / IAM 19013 / LMG 5710 / NBRC 13948 / NRRL B-527 / VKM B-1787 / 2291 / W).